A 647-amino-acid chain; its full sequence is Pumilio homolog 3 (647 aa).

The segment covering 1–10 (MEVKGKKKIT) has biased composition (basic residues). Residues 1 to 123 (MEVKGKKKIT…KKKKELKQNR (123 aa)) form a disordered region. Lys-33 carries the post-translational modification N6-acetyllysine. The span at 59–68 (PGKKRVKQFK) shows a compositional bias: basic residues. Over residues 93 to 123 (FQPDGKSDESAAKKPKWDDFKKKKKELKQNR) the composition is skewed to basic and acidic residues. Positions 105-117 (KKPKWDDFKKKKK) match the Nuclear localization signal motif. The 368-residue stretch at 142–509 (ESLRRKDCDK…VVLDKSVCVL (368 aa)) folds into the PUM-HD domain. Pumilio repeat units follow at residues 176–211 (HDSTRVIQCLIQYGSEEQRKWAFEELQGDLVELSKA), 212–247 (KYSRNIVKKFLMYGSKPQIAEIIRSFKGHVRKMLRH), 248–276 (SEASAIVEYAYNDKAILEQRNMLTEELYG), 288–324 (PTLEKVLEVQPGKLELILDEMKQILTPMAQKEAVIKH), 325–360 (SLVHKVFLDFFTYAPPKLRSELIEAIREAVVYLAHT), 361–396 (HDGARVAMHCLWHGTPKDRKVIVKTMKTYVEKIANG), 397–434 (QYSHLVLLAAFDCIDDTKLVKQIIISEVISSLPSIVND), 435–503 (KYGR…VVLD), 504–550 (KSVC…IAEH), 551–595 (PAGH…WASI), and 596–635 (NRGAIVLSSLLQSCDQDVVNKVKAGLKTLIPTLEKTKSTS).

In terms of assembly, interacts with PARP1 (via catalytic domain).

The protein localises to the nucleus. It localises to the nucleolus. It is found in the nucleoplasm. The protein resides in the chromosome. Inhibits the poly(ADP-ribosyl)ation activity of PARP1 and the degradation of PARP1 by CASP3 following genotoxic stress. Binds to double-stranded RNA or DNA without sequence specificity. Involved in development of the eye and of primordial germ cells. This is Pumilio homolog 3 from Rattus norvegicus (Rat).